The sequence spans 68 residues: Ribosome modulation factor (68 aa).

This sequence belongs to the ribosome modulation factor family.

Its subcellular location is the cytoplasm. In terms of biological role, during stationary phase, converts 70S ribosomes to an inactive dimeric form (100S ribosomes). The sequence is that of Ribosome modulation factor from Alcanivorax borkumensis (strain ATCC 700651 / DSM 11573 / NCIMB 13689 / SK2).